A 504-amino-acid chain; its full sequence is Anaerobic nitric oxide reductase transcription regulator NorR (504 aa).

Position 57 is a 4-aspartylphosphate (aspartate 57). Residues 187–416 (MIGLSPGMTQ…LEHAIHRAVV (230 aa)) enclose the Sigma-54 factor interaction domain. Residues 215–222 (GETGTGKE) and 278–287 (ADNGTLFLDE) each bind ATP. A DNA-binding region (H-T-H motif) is located at residues 479 to 498 (WAASARMLETDVANLHRLAK).

It participates in nitrogen metabolism; nitric oxide reduction. Functionally, required for the expression of anaerobic nitric oxide (NO) reductase, acts as a transcriptional activator for at least the norVW operon. Activation also requires sigma-54. In Escherichia coli (strain SMS-3-5 / SECEC), this protein is Anaerobic nitric oxide reductase transcription regulator NorR.